The following is a 176-amino-acid chain: Prion-like protein doppel (176 aa).

The first 25 residues, 1–25 (MRKHLSWWWLATVCMLLFSHLSAVQ), serve as a signal peptide directing secretion. Positions 27-50 (RGIKHRIKWNRKALPSTAQITEAQ) are flexible tail. T43 carries O-linked (GalNAc...) threonine glycosylation. The interval 51-152 (VAENRPGAFI…KHCEFWLERG (102 aa)) is globular. Intrachain disulfides connect C94–C145 and C108–C140. N-linked (GlcNAc...) asparagine glycosylation is found at N98 and N110. Positions 122 to 139 (KPDNKLHQQVLWRLVQEL) are cu(2+) binding. A lipid anchor (GPI-anchor amidated glycine) is attached at G152. A propeptide spans 153-176 (AGLRVTMHQPVLLCLLALIWLTVK) (removed in mature form).

Belongs to the prion family. N-glycosylated. N-glycosylated at two distinct sites. Post-translationally, O-glycosylated. In terms of tissue distribution, expressed in testis, in Sertoli cells, ejaculated spermatozoa and in seminal fluid (at protein level).

It localises to the cell membrane. In terms of biological role, required for normal acrosome reaction and for normal male fertility. Can bind Cu(2+). This chain is Prion-like protein doppel (PRND), found in Homo sapiens (Human).